The following is a 483-amino-acid chain: Glutamate--tRNA ligase (483 aa).

The 'HIGH' region signature appears at 14 to 24; that stretch reads PSPTGDPHVGT. The 'KMSKS' region signature appears at 253 to 257; the sequence is KISKR. Lys-256 serves as a coordination point for ATP.

Belongs to the class-I aminoacyl-tRNA synthetase family. Glutamate--tRNA ligase type 1 subfamily. As to quaternary structure, monomer.

It is found in the cytoplasm. It catalyses the reaction tRNA(Glu) + L-glutamate + ATP = L-glutamyl-tRNA(Glu) + AMP + diphosphate. In terms of biological role, catalyzes the attachment of glutamate to tRNA(Glu) in a two-step reaction: glutamate is first activated by ATP to form Glu-AMP and then transferred to the acceptor end of tRNA(Glu). In Deinococcus radiodurans (strain ATCC 13939 / DSM 20539 / JCM 16871 / CCUG 27074 / LMG 4051 / NBRC 15346 / NCIMB 9279 / VKM B-1422 / R1), this protein is Glutamate--tRNA ligase.